Reading from the N-terminus, the 65-residue chain is Large ribosomal subunit protein bL35 (65 aa).

2 stretches are compositionally biased toward basic residues: residues 1 to 15 (MPKM…KRFT) and 26 to 44 (QAFK…KRQL). Positions 1-65 (MPKMKTKKSA…KSVRAMMPYA (65 aa)) are disordered.

This sequence belongs to the bacterial ribosomal protein bL35 family.

The sequence is that of Large ribosomal subunit protein bL35 from Ralstonia nicotianae (strain ATCC BAA-1114 / GMI1000) (Ralstonia solanacearum).